The sequence spans 870 residues: Protein csx2 (870 aa).

Residues 212 to 251 form a disordered region; that stretch reads TSPEISDAPPLSGNVDPLPINSPPLTNPVARDIDQTEPED. In terms of domain architecture, PH spans 510–614; sequence TSAKQGLLLA…WIEAIQYSIS (105 aa). Residues serine 625, serine 653, and serine 655 each carry the phosphoserine modification. Residues 647-672 are disordered; that stretch reads RVASVTSPSRHNSDSKEKKQTKSPSL. Positions 657–666 are enriched in basic and acidic residues; sequence HNSDSKEKKQ. An Arf-GAP domain is found at 670–791; that stretch reads PSLVKTLKEM…RFIKSSFSHD (122 aa). Residues 686–710 form a C4-type zinc finger; the sequence is CADCNTTARVEWCAINFPVVLCIDC.

The protein is Protein csx2 (csx2) of Schizosaccharomyces pombe (strain 972 / ATCC 24843) (Fission yeast).